The primary structure comprises 413 residues: Hibernation-specific plasma protein HP-55 (413 aa).

The first 24 residues, 1–24 (MPSSISWGLLLLAALSCLGPGSLA), serve as a signal peptide directing secretion. Glutamine 25 is modified (pyrrolidone carboxylic acid). N-linked (GlcNAc...) asparagine glycosylation is found at asparagine 65, asparagine 102, asparagine 165, and asparagine 266. The RCL stretch occupies residues 368–387 (GGTVLGAEAMLQAPIMKFDR).

This sequence belongs to the serpin family. In terms of assembly, plasma proteins HP-20, HP-25, HP-27 and HP-55 form a 140 kDa complex via disulfide bonds in the plasma. In terms of processing, the N-terminus is blocked. As to expression, plasma; synthesized in the liver.

It localises to the secreted. Protease inhibitor. In Tamias sibiricus (Siberian chipmunk), this protein is Hibernation-specific plasma protein HP-55.